The sequence spans 196 residues: Small ribosomal subunit protein uS5 (196 aa).

The 64-residue stretch at 17–80 folds into the S5 DRBM domain; it reads FEEKMLFVNR…AVARKNMITV (64 aa). Residues 164 to 196 form a disordered region; the sequence is GTEVRPSLSSDSPAGRSATTEAGEGVADTGGMQ. Polar residues predominate over residues 170-183; sequence SLSSDSPAGRSATT.

The protein belongs to the universal ribosomal protein uS5 family. Part of the 30S ribosomal subunit. Contacts proteins S4 and S8.

Functionally, with S4 and S12 plays an important role in translational accuracy. Its function is as follows. Located at the back of the 30S subunit body where it stabilizes the conformation of the head with respect to the body. This is Small ribosomal subunit protein uS5 from Deinococcus radiodurans (strain ATCC 13939 / DSM 20539 / JCM 16871 / CCUG 27074 / LMG 4051 / NBRC 15346 / NCIMB 9279 / VKM B-1422 / R1).